Reading from the N-terminus, the 413-residue chain is Multifunctional CCA protein (413 aa).

Residues G8 and R11 each coordinate ATP. Residues G8 and R11 each coordinate CTP. Residues D21 and D23 each contribute to the Mg(2+) site. Positions 91, 137, and 140 each coordinate ATP. CTP is bound by residues R91, R137, and R140. Residues T228–W329 form the HD domain.

Belongs to the tRNA nucleotidyltransferase/poly(A) polymerase family. Bacterial CCA-adding enzyme type 1 subfamily. Monomer. Can also form homodimers and oligomers. Mg(2+) serves as cofactor. It depends on Ni(2+) as a cofactor.

It carries out the reaction a tRNA precursor + 2 CTP + ATP = a tRNA with a 3' CCA end + 3 diphosphate. The enzyme catalyses a tRNA with a 3' CCA end + 2 CTP + ATP = a tRNA with a 3' CCACCA end + 3 diphosphate. In terms of biological role, catalyzes the addition and repair of the essential 3'-terminal CCA sequence in tRNAs without using a nucleic acid template. Adds these three nucleotides in the order of C, C, and A to the tRNA nucleotide-73, using CTP and ATP as substrates and producing inorganic pyrophosphate. tRNA 3'-terminal CCA addition is required both for tRNA processing and repair. Also involved in tRNA surveillance by mediating tandem CCA addition to generate a CCACCA at the 3' terminus of unstable tRNAs. While stable tRNAs receive only 3'-terminal CCA, unstable tRNAs are marked with CCACCA and rapidly degraded. In Enterobacter sp. (strain 638), this protein is Multifunctional CCA protein.